The primary structure comprises 204 residues: Probable nicotinate-nucleotide adenylyltransferase (204 aa).

Belongs to the NadD family.

It catalyses the reaction nicotinate beta-D-ribonucleotide + ATP + H(+) = deamido-NAD(+) + diphosphate. The protein operates within cofactor biosynthesis; NAD(+) biosynthesis; deamido-NAD(+) from nicotinate D-ribonucleotide: step 1/1. In terms of biological role, catalyzes the reversible adenylation of nicotinate mononucleotide (NaMN) to nicotinic acid adenine dinucleotide (NaAD). This is Probable nicotinate-nucleotide adenylyltransferase from Dehalococcoides mccartyi (strain CBDB1).